The chain runs to 326 residues: DnaJ homolog subfamily B member 6 (326 aa).

The J domain occupies 2–69; sequence VDYYEVLGVQ…KKRDIYDKYG (68 aa). The interval 2–146 is interaction with HSP70; the sequence is VDYYEVLGVQ…TGSFFSAFSG (145 aa). An interaction with KRT18 region spans residues 119 to 242; it reads FEDFFGNRRG…ADDDALAEER (124 aa). Arginine 135 carries the omega-N-methylarginine modification. Residues 249-326 are disordered; that stretch reads ALPAQPAGLR…KKKKSTKGNH (78 aa). Serine 277 carries the phosphoserine modification.

In terms of assembly, homooligomer. Interacts with BAG3, HSPB8 and STUB1. Interacts with ALKBH1. Interacts with HSP70, KRT18 and PTTG. Interacts with histone deacetylases HDAC4, HDAC6, and SIRT2, HDAC activity is required for antiaggregation. In terms of tissue distribution, widely expressed. Highest levels in testis and brain, and lower levels in heart, spleen, intestine, ovary, placenta, lung, kidney, pancreas, thymus, prostate, skeletal muscle, liver and leukocytes. In testis, expressed in germ cells in the earlier stages of differentiation pathway as well as in spermatids. In brain, expressed at a higher level in hippocampus and thalamus and a lower level in amygdala, substantia nigra, corpus callosum and caudate nucleus.

Its subcellular location is the cytoplasm. The protein resides in the perinuclear region. The protein localises to the nucleus. It is found in the myofibril. It localises to the sarcomere. Its subcellular location is the z line. In terms of biological role, has a stimulatory effect on the ATPase activity of HSP70 in a dose-dependent and time-dependent manner and hence acts as a co-chaperone of HSP70. Plays an indispensable role in the organization of KRT8/KRT18 filaments. Acts as an endogenous molecular chaperone for neuronal proteins including huntingtin. Suppresses aggregation and toxicity of polyglutamine-containing, aggregation-prone proteins. Also reduces cellular toxicity and caspase-3 activity. Its function is as follows. Isoform B but not isoform A inhibits huntingtin aggregation. This Homo sapiens (Human) protein is DnaJ homolog subfamily B member 6 (DNAJB6).